The sequence spans 761 residues: Polyribonucleotide nucleotidyltransferase (761 aa).

The Mg(2+) site is built by Asp532 and Asp538. Positions 598 to 657 constitute a KH domain; sequence PRVISVQIPVDKIGELIGPKGKTINAIQDETGADISIDEDGTVYIGAVDGPSAEAARAQV. Positions 669-741 constitute an S1 motif domain; it reads GEQFLGTVVK…DRGKLSLAPV (73 aa).

This sequence belongs to the polyribonucleotide nucleotidyltransferase family. Mg(2+) is required as a cofactor.

It localises to the cytoplasm. The catalysed reaction is RNA(n+1) + phosphate = RNA(n) + a ribonucleoside 5'-diphosphate. Its function is as follows. Involved in mRNA degradation. Catalyzes the phosphorolysis of single-stranded polyribonucleotides processively in the 3'- to 5'-direction. The polypeptide is Polyribonucleotide nucleotidyltransferase (Leifsonia xyli subsp. xyli (strain CTCB07)).